Consider the following 176-residue polypeptide: Large ribosomal subunit protein uL16 (176 aa).

Belongs to the universal ribosomal protein uL16 family.

This chain is Large ribosomal subunit protein uL16, found in Sulfolobus acidocaldarius (strain ATCC 33909 / DSM 639 / JCM 8929 / NBRC 15157 / NCIMB 11770).